We begin with the raw amino-acid sequence, 84 residues long: Dihydroneopterin aldolase (84 aa).

Substrate is bound by residues Glu22, Tyr54, and 73–74 (IE).

It belongs to the DHNA family.

It carries out the reaction 7,8-dihydroneopterin = 6-hydroxymethyl-7,8-dihydropterin + glycolaldehyde. The enzyme catalyses 7,8-dihydroneopterin = 7,8-dihydromonapterin. It functions in the pathway cofactor biosynthesis; tetrahydrofolate biosynthesis; 2-amino-4-hydroxy-6-hydroxymethyl-7,8-dihydropteridine diphosphate from 7,8-dihydroneopterin triphosphate: step 3/4. Catalyzes the conversion of 7,8-dihydroneopterin to 6-hydroxymethyl-7,8-dihydropterin. Can also catalyze the epimerization of carbon 2' of dihydroneopterin to dihydromonapterin. This is Dihydroneopterin aldolase (folB) from Staphylococcus haemolyticus.